Reading from the N-terminus, the 364-residue chain is Uroporphyrinogen decarboxylase (364 aa).

Substrate contacts are provided by residues 28-32, Asp-78, Tyr-160, Thr-215, and His-333; that span reads RQAGR.

Belongs to the uroporphyrinogen decarboxylase family. In terms of assembly, homodimer.

Its subcellular location is the cytoplasm. It catalyses the reaction uroporphyrinogen III + 4 H(+) = coproporphyrinogen III + 4 CO2. It functions in the pathway porphyrin-containing compound metabolism; protoporphyrin-IX biosynthesis; coproporphyrinogen-III from 5-aminolevulinate: step 4/4. Functionally, catalyzes the decarboxylation of four acetate groups of uroporphyrinogen-III to yield coproporphyrinogen-III. In Burkholderia pseudomallei (strain 668), this protein is Uroporphyrinogen decarboxylase.